A 262-amino-acid polypeptide reads, in one-letter code: MRYQNMFETLKKQDKMAFIPFVTLGDPNYEWSFEIIKTLITSGVSALELGFAFSDPVADGVTIQASHLRALKHASMAKNFQLLRALRDYNPHIPIGLLAYANLIFSYGVDGFYAQIKECGVDSVLIADMPLIEKELVIKSAQKHQIKQIFIASPNASVKDLEQAAMHSQGYIYTLARSGVTGASRILENDASAIIKTLKAFSPTPALLGFGISQKEHIKNAKEMGADGVICGSALVKIIEENLNNENAMLEKIKGFIGGMIF.

Catalysis depends on proton acceptor residues glutamate 48 and aspartate 59.

It belongs to the TrpA family. Tetramer of two alpha and two beta chains.

It carries out the reaction (1S,2R)-1-C-(indol-3-yl)glycerol 3-phosphate + L-serine = D-glyceraldehyde 3-phosphate + L-tryptophan + H2O. The protein operates within amino-acid biosynthesis; L-tryptophan biosynthesis; L-tryptophan from chorismate: step 5/5. The alpha subunit is responsible for the aldol cleavage of indoleglycerol phosphate to indole and glyceraldehyde 3-phosphate. This chain is Tryptophan synthase alpha chain, found in Helicobacter pylori (strain P12).